A 456-amino-acid chain; its full sequence is tRNA(Ile)-lysidine synthase (456 aa).

Residue 28 to 33 (SGGSDS) coordinates ATP.

The protein belongs to the tRNA(Ile)-lysidine synthase family.

The protein localises to the cytoplasm. It carries out the reaction cytidine(34) in tRNA(Ile2) + L-lysine + ATP = lysidine(34) in tRNA(Ile2) + AMP + diphosphate + H(+). Ligates lysine onto the cytidine present at position 34 of the AUA codon-specific tRNA(Ile) that contains the anticodon CAU, in an ATP-dependent manner. Cytidine is converted to lysidine, thus changing the amino acid specificity of the tRNA from methionine to isoleucine. In Brucella anthropi (strain ATCC 49188 / DSM 6882 / CCUG 24695 / JCM 21032 / LMG 3331 / NBRC 15819 / NCTC 12168 / Alc 37) (Ochrobactrum anthropi), this protein is tRNA(Ile)-lysidine synthase.